The following is a 299-amino-acid chain: Bifunctional protein FolD (299 aa).

Residues glycine 164–serine 166 and isoleucine 234 contribute to the NADP(+) site.

This sequence belongs to the tetrahydrofolate dehydrogenase/cyclohydrolase family. In terms of assembly, homodimer.

It carries out the reaction (6R)-5,10-methylene-5,6,7,8-tetrahydrofolate + NADP(+) = (6R)-5,10-methenyltetrahydrofolate + NADPH. The enzyme catalyses (6R)-5,10-methenyltetrahydrofolate + H2O = (6R)-10-formyltetrahydrofolate + H(+). It functions in the pathway one-carbon metabolism; tetrahydrofolate interconversion. Functionally, catalyzes the oxidation of 5,10-methylenetetrahydrofolate to 5,10-methenyltetrahydrofolate and then the hydrolysis of 5,10-methenyltetrahydrofolate to 10-formyltetrahydrofolate. The sequence is that of Bifunctional protein FolD from Christiangramia forsetii (strain DSM 17595 / CGMCC 1.15422 / KT0803) (Gramella forsetii).